The following is a 605-amino-acid chain: uncharacterized protein (605 aa).

A helical transmembrane segment spans residues isoleucine 56 to phenylalanine 78.

The protein resides in the cell membrane. This is an uncharacterized protein from Bacillus subtilis (strain 168).